The chain runs to 300 residues: Type II methyltransferase M.Cfr9I (300 aa).

The interval 109–129 is disordered; the sequence is RGYRAPDKKNPARAMAVRPDT.

This sequence belongs to the N(4)/N(6)-methyltransferase family. N(4) subfamily.

The catalysed reaction is a 2'-deoxycytidine in DNA + S-adenosyl-L-methionine = an N(4)-methyl-2'-deoxycytidine in DNA + S-adenosyl-L-homocysteine + H(+). Functionally, a beta subtype methylase, recognizes the double-stranded sequence 5'-CCCGGG-3', methylates C-2 on both strands, and protects the DNA from cleavage by the Cfr9I endonuclease. This chain is Type II methyltransferase M.Cfr9I, found in Citrobacter freundii.